A 131-amino-acid polypeptide reads, in one-letter code: Large ribosomal subunit protein bL21 (131 aa).

Belongs to the bacterial ribosomal protein bL21 family. Part of the 50S ribosomal subunit. Contacts protein L20.

In terms of biological role, this protein binds to 23S rRNA in the presence of protein L20. The chain is Large ribosomal subunit protein bL21 from Cereibacter sphaeroides (strain ATCC 17023 / DSM 158 / JCM 6121 / CCUG 31486 / LMG 2827 / NBRC 12203 / NCIMB 8253 / ATH 2.4.1.) (Rhodobacter sphaeroides).